Consider the following 894-residue polypeptide: CWF19-like protein 2 (894 aa).

A disordered region spans residues 1-147; sequence MATSMAAASG…DEKSGKDDTQ (147 aa). Basic and acidic residues predominate over residues 13–56; that stretch reads ESAKSIEERKEQTRNARAEVLRQAKANFEKEERRKELKRLRGED. Residues 13 to 107 adopt a coiled-coil conformation; it reads ESAKSIEERK…KKQKYEKNNE (95 aa). Residue serine 75 is modified to Phosphoserine. Positions 76-99 are enriched in basic residues; the sequence is VKKKKKKDKHSKKAKKEKKKKSKK. Over residues 128-147 the composition is skewed to basic and acidic residues; that stretch reads PDKEKAWKVKDEKSGKDDTQ. The stretch at 166–281 forms a coiled coil; the sequence is SSSSLKAEKE…AEKAASTKED (116 aa). Lysine 171 participates in a covalent cross-link: Glycyl lysine isopeptide (Lys-Gly) (interchain with G-Cter in SUMO2). A compositionally biased stretch (basic and acidic residues) spans 270-284; it reads EDAEKAASTKEDYRR. Residues 270 to 483 are disordered; that stretch reads EDAEKAASTK…STFAGSPERE (214 aa). Residues 320–330 are compositionally biased toward polar residues; that stretch reads TTDTAKNSNNE. Residues 332–352 show a composition bias toward basic and acidic residues; it reads FIGDEKDKRPGSLETCRRESN. Phosphoserine occurs at positions 360 and 372. Composition is skewed to basic and acidic residues over residues 410–430 and 440–473; these read KNSE…DKKH and TDEH…RDTK. 2 positions are modified to phosphoserine: serine 479 and serine 484. The stretch at 502 to 530 forms a coiled coil; that stretch reads KAEMMGNMELAEQLKVQLEKANKFKETIT. A disordered region spans residues 561–583; it reads NTPGKSLESQGGRRKRQMVSTHE. A Glycyl lysine isopeptide (Lys-Gly) (interchain with G-Cter in SUMO2) cross-link involves residue lysine 604. Residues 644–675 adopt a coiled-coil conformation; the sequence is AAERERLGEEEENQRKKAIAEHRSLAAQMEKC.

It belongs to the CWF19 family.

The protein is CWF19-like protein 2 (CWF19L2) of Homo sapiens (Human).